The primary structure comprises 193 residues: AP-3 complex subunit sigma-1 (193 aa).

S191 is subject to Phosphoserine.

This sequence belongs to the adaptor complexes small subunit family. In terms of assembly, adaptor protein complex 3 (AP-3) is a heterotetramer composed of two large adaptins (delta-type subunit AP3D1 and beta-type subunit AP3B1 or AP3B2), a medium adaptin (mu-type subunit AP3M1 or AP3M2) and a small adaptin (sigma-type subunit APS1 or AP3S2). Interacts with AGAP1. AP-3 associates with the BLOC-1 complex.

The protein localises to the golgi apparatus. It localises to the cytoplasmic vesicle membrane. Its function is as follows. Part of the AP-3 complex, an adaptor-related complex which is not clathrin-associated. The complex is associated with the Golgi region as well as more peripheral structures. It facilitates the budding of vesicles from the Golgi membrane and may be directly involved in trafficking to lysosomes. In concert with the BLOC-1 complex, AP-3 is required to target cargos into vesicles assembled at cell bodies for delivery into neurites and nerve terminals. The chain is AP-3 complex subunit sigma-1 (AP3S1) from Bos taurus (Bovine).